Here is a 475-residue protein sequence, read N- to C-terminus: Neuronal acetylcholine receptor subunit alpha-5 (475 aa).

The first 29 residues, 1 to 29 (MAAPGWGRWVLGLGPLLLQVFLPFQLVAG), serve as a signal peptide directing secretion. At 30–261 (RWGPEGAGGG…VIKRLPLFYT (232 aa)) the chain is on the extracellular side. A disulfide bond links C177 and C191. N190 and N236 each carry an N-linked (GlcNAc...) asparagine glycan. The cysteines at positions 241 and 242 are disulfide-linked. Helical transmembrane passes span 262–282 (LFLI…FYLP), 289–309 (ICLC…IEEI), and 324–344 (LVFT…AINI). At 345 to 437 (HHRSSSTHDA…KFIAQVLDRM (93 aa)) the chain is on the cytoplasmic side. The chain crosses the membrane as a helical span at residues 438-458 (FLWTFLLVSVVGSLGLFVPVI). Topologically, residues 459-475 (YKWANIIVPIHIGNENK) are extracellular.

The protein belongs to the ligand-gated ion channel (TC 1.A.9) family. Acetylcholine receptor (TC 1.A.9.1) subfamily. Alpha-5/CHRNA5 sub-subfamily. In terms of assembly, neuronal AChR that forms heteropentamers composed of two different type of subunits: alpha and non-alpha (beta). CHRNA5/alpha-5 subunit is only able to form functional nAChRs when co-assembled with another alpha subunit, can be combined to CHRNA4/alpha-4 or CHRNA3/alpha-3 and CHRNB4/beta-4 or CHRNB2/beta-2 to give rise to functional receptors. Interacts with LYPD6.

It localises to the synaptic cell membrane. The protein localises to the cell membrane. The enzyme catalyses Ca(2+)(in) = Ca(2+)(out). It catalyses the reaction K(+)(in) = K(+)(out). It carries out the reaction Na(+)(in) = Na(+)(out). Activated by a myriad of ligands such as acetylcholine, cytisine, nicotine, choline and epibatidine. Component of neuronal acetylcholine receptors (nAChRs) that function as pentameric, ligand-gated cation channels with high calcium permeability among other activities. nAChRs are excitatory neurotrasnmitter receptors formed by a collection of nAChR subunits known to mediate synaptic transmission in the nervous system and the neuromuscular junction. Each nAchR subunit confers differential attributes to channel properties, including activation, deactivation and desensitization kinetics, pH sensitivity, cation permeability, and binding to allosteric modulators. Has an accessory rather than functional role and is only able to form functional nAChRs when co-assembled with another beta subunit. Participates in pentameric assemblies along with CHRNA3, CHRNA4, CHRNB2 and CHRNB4. Increases receptor sensitivity to acetylcholine and nicotine when associated with CHRNA4 and CHRNB2. Plays a role in nicotine addiction. The polypeptide is Neuronal acetylcholine receptor subunit alpha-5 (CHRNA5) (Bos taurus (Bovine)).